Here is a 453-residue protein sequence, read N- to C-terminus: Allantoinase (453 aa).

Zn(2+)-binding residues include His-59, His-61, Lys-146, His-186, His-242, and Asp-315. Lys-146 is modified (N6-carboxylysine).

The protein belongs to the metallo-dependent hydrolases superfamily. Allantoinase family. Homotetramer. It depends on Zn(2+) as a cofactor. In terms of processing, carboxylation allows a single lysine to coordinate two zinc ions.

It catalyses the reaction (S)-allantoin + H2O = allantoate + H(+). Its pathway is nitrogen metabolism; (S)-allantoin degradation; allantoate from (S)-allantoin: step 1/1. In terms of biological role, catalyzes the conversion of allantoin (5-ureidohydantoin) to allantoic acid by hydrolytic cleavage of the five-member hydantoin ring. This chain is Allantoinase, found in Salmonella gallinarum (strain 287/91 / NCTC 13346).